Reading from the N-terminus, the 423-residue chain is MAGRQSGWSQAALLQFLLGMCLMVMPPIQARSLRFVTLLYRHGDRSPVKAYPKDPYQEEKWPQGFGQLTKEGMLQHWELGQALRQRYHGFLNASYHRQEVYVRSTDFDRTLMSAEANLAGLFPPTEVQHFNPNISWQPIPVHTVPITEDRLLKFPLGPCPRYEQLQNETRQTPEYQNMSIQNAQFLDMVANETGLMNLTLETIWNVYDTLFCEQTHGLLLPPWASPQTVQALSQLKDFSFLFLFGIHDQVQKARLQGGVLLAQILKNLTLMATTSQFPKLLVYSAHDTTLVALQMALNVYNGKQAPYASCHIFELYQEDNGNFSVEMYFRNDSKKAPWPLTLPGCPHRCPLQDFLRLTEPVIPKDWQKECQLASDTADTEVIVALAVCGSILFLLIVLLLTVLFRMQAQPPGYHHVADREDHA.

Residues 1-30 form the signal peptide; the sequence is MAGRQSGWSQAALLQFLLGMCLMVMPPIQA. Topologically, residues 31–380 are lumenal; that stretch reads RSLRFVTLLY…QLASDTADTE (350 aa). His-42 serves as the catalytic Nucleophile. Residues Asn-92, Asn-133, Asn-167, Asn-177, Asn-191, Asn-197, and Asn-267 are each glycosylated (N-linked (GlcNAc...) asparagine). Disulfide bonds link Cys-159-Cys-370, Cys-212-Cys-310, and Cys-345-Cys-349. Asp-287 serves as the catalytic Proton donor. N-linked (GlcNAc...) asparagine glycosylation is found at Asn-322 and Asn-331. A helical transmembrane segment spans residues 381–401; sequence VIVALAVCGSILFLLIVLLLT. The Cytoplasmic segment spans residues 402 to 423; the sequence is VLFRMQAQPPGYHHVADREDHA.

Belongs to the histidine acid phosphatase family. In terms of processing, the membrane-bound form is converted to the soluble form by sequential proteolytic processing. First, the C-terminal cytoplasmic tail is removed. Cleavage by a lysosomal protease releases the soluble form in the lysosome lumen.

It is found in the lysosome membrane. The protein localises to the lysosome lumen. It carries out the reaction a phosphate monoester + H2O = an alcohol + phosphate. This chain is Lysosomal acid phosphatase (Acp2), found in Rattus norvegicus (Rat).